The sequence spans 2764 residues: Teneurin-2 (2764 aa).

Residues M1–C375 enclose the Teneurin N-terminal domain. The Cytoplasmic portion of the chain corresponds to M1–S379. S90 and S124 each carry phosphoserine. Residues T111–N271 form a disordered region. Over residues S141 to T155 the composition is skewed to polar residues. At T155 the chain carries Phosphothreonine. S157 bears the Phosphoserine mark. A compositionally biased stretch (basic and acidic residues) spans N159–G168. A compositionally biased stretch (low complexity) spans T174–S188. Residues D202–D211 are compositionally biased toward polar residues. A compositionally biased stretch (low complexity) spans S229–P240. The helical transmembrane segment at A380 to L400 threads the bilayer. Residues G401–R2764 are Extracellular-facing. 2 N-linked (GlcNAc...) asparagine glycosylation sites follow: N443 and N482. EGF-like domains lie at D575–A603, L598–D634, P636–E668, E669–L701, A702–S735, V737–D765, V768–T796, and D798–N831. 22 disulfide bridges follow: C576-C586, C580-C591, C593-C602, C611-C622, C624-C633, C640-C651, C645-C656, C658-C667, C672-C683, C677-C688, C690-C699, C710-C723, C725-C734, C738-C748, C742-C753, C755-C764, C769-C779, C773-C784, C786-C795, C800-C810, C804-C819, and C821-C830. 3 N-linked (GlcNAc...) asparagine glycosylation sites follow: N915, N938, and N1257. 5 NHL repeats span residues L1262–L1306, A1332–I1376, L1391–R1442, L1464–L1491, and C1520–N1563. One copy of the YD 1 repeat lies at Y1573–H1592. N1606 carries N-linked (GlcNAc...) asparagine glycosylation. YD repeat units follow at residues Y1609–R1629, Y1672–F1691, and Y1692–H1714. N-linked (GlcNAc...) asparagine glycans are attached at residues N1702, N1739, N1763, N1797, and N1882. 18 YD repeats span residues Y1885–D1904, Y1926–E1944, Y1945–S1965, Y1972–D1989, Y1990–K2011, Y2012–T2029, Y2032–T2052, Y2055–I2075, Y2083–P2103, Y2109–Y2126, Y2127–V2153, Y2155–Q2168, Y2169–T2192, Y2195–S2215, Y2216–L2236, Y2238–G2258, Y2270–Y2290, and Y2292–F2312. Residue N1983 is glycosylated (N-linked (GlcNAc...) asparagine). N-linked (GlcNAc...) asparagine glycosylation occurs at N2187. N-linked (GlcNAc...) asparagine glycosylation is present at N2327. A YD 23 repeat occupies Y2338 to L2379. N-linked (GlcNAc...) asparagine glycosylation is present at N2638.

The protein belongs to the tenascin family. Teneurin subfamily. As to quaternary structure, homodimer; disulfide-linked. Heterodimer with either TENM1 or TENM3. May also form heterodimer with TENM4. Derives from the membrane form by proteolytic processing. In terms of processing, derives from the plasma membrane form by proteolytic cleavage and translocates to the nucleus. Homophilic binding of the C-terminal extracellular domain stimulates its proteolytic cleavage and release in the cytoplasmic. Is subjected to rapid degradation by the proteasome pathway. Expressed in the cortex, CA1, CA2, CA3, dentate gyrus and granular layer of the hippocampus. Expressed in the Purkinje cells and molecular layer of the cerebellum.

Its subcellular location is the cell membrane. It is found in the presynaptic cell membrane. It localises to the postsynaptic cell membrane. The protein resides in the endoplasmic reticulum. The protein localises to the golgi apparatus. Its subcellular location is the synapse. It is found in the cell projection. It localises to the dendritic spine. The protein resides in the filopodium. The protein localises to the growth cone. Its subcellular location is the nucleus. It is found in the PML body. Involved in neural development, regulating the establishment of proper connectivity within the nervous system. Acts as a ligand of the ADGRL1 and ADGRL3 receptors that are expressed at the surface of adjacent cells. Promotes the formation of filopodia and enlarged growth cone in neuronal cells. Mediates axon guidance and homophilic and heterophilic cell-cell adhesion. May function as a cellular signal transducer. Functionally, induces gene transcription inhibition. The sequence is that of Teneurin-2 (Tenm2) from Mus musculus (Mouse).